The following is a 316-amino-acid chain: Phosphatidylinositol mannoside acyltransferase (316 aa).

Residue histidine 137 is the Proton acceptor of the active site. Hexadecanoyl-CoA-binding residues include histidine 137 and arginine 175. Glutamate 211 is an active-site residue. Glutamate 240 is a hexadecanoyl-CoA binding site.

Belongs to the LpxL/LpxM/LpxP family.

The protein localises to the cell inner membrane. It catalyses the reaction a 2,6-O-bis(alpha-D-mannopyranosyl)-1-phosphatidyl-1D-myo-inositol + an acyl-CoA = a 2-O-(alpha-D-mannosyl)-6-O-(6-O-acyl-alpha-D-mannosyl)-1-phosphatidyl-1D-myo-inositol + CoA. The catalysed reaction is a 1,2-diacyl-sn-glycero-3-phospho-[alpha-D-mannopyranosyl-(1&lt;-&gt;6)-D-myo-inositol] + an acyl-CoA = a 1,2-diacyl-sn-glycero-3-phospho-[alpha-D-6-acyl-mannopyranosyl-(1&lt;-&gt;6)-D-myo-inositol] + CoA. Its pathway is phospholipid metabolism; phosphatidylinositol metabolism. Functionally, catalyzes the transfer of a palmitoyl moiety from palmitoyl-CoA to the 6-position of the mannose ring linked to the 2-position of myo-inositol in phosphatidyl-myo-inositol monomannoside (PIM1) or dimannoside (PIM2). This chain is Phosphatidylinositol mannoside acyltransferase, found in Mycobacterium tuberculosis (strain CDC 1551 / Oshkosh).